A 67-amino-acid chain; its full sequence is DNA gyrase inhibitor YacG (67 aa).

C9, C12, C28, and C32 together coordinate Zn(2+). A disordered region spans residues 46–67; that stretch reads RIPSSGDLNDSDDWSEQPLDRQ.

The protein belongs to the DNA gyrase inhibitor YacG family. As to quaternary structure, interacts with GyrB. Zn(2+) serves as cofactor.

Functionally, inhibits all the catalytic activities of DNA gyrase by preventing its interaction with DNA. Acts by binding directly to the C-terminal domain of GyrB, which probably disrupts DNA binding by the gyrase. The polypeptide is DNA gyrase inhibitor YacG (Erwinia tasmaniensis (strain DSM 17950 / CFBP 7177 / CIP 109463 / NCPPB 4357 / Et1/99)).